We begin with the raw amino-acid sequence, 426 residues long: Glutamate-1-semialdehyde 2,1-aminomutase (426 aa).

Lysine 265 carries the post-translational modification N6-(pyridoxal phosphate)lysine.

This sequence belongs to the class-III pyridoxal-phosphate-dependent aminotransferase family. HemL subfamily. Homodimer. Pyridoxal 5'-phosphate is required as a cofactor.

It is found in the cytoplasm. The catalysed reaction is (S)-4-amino-5-oxopentanoate = 5-aminolevulinate. The protein operates within porphyrin-containing compound metabolism; protoporphyrin-IX biosynthesis; 5-aminolevulinate from L-glutamyl-tRNA(Glu): step 2/2. The protein is Glutamate-1-semialdehyde 2,1-aminomutase of Escherichia coli O9:H4 (strain HS).